A 163-amino-acid polypeptide reads, in one-letter code: MEFDVTIEIPKGSRNKYEVDHETGRIRLDRRLFTSTAYPTDYGFVENTLGEDGDPLDALVILDEPTFPGCLIRCRAIGMFRMTDEAGGDDKLLCVPSTDPRVEHLRDIHHVSEFDRLEIQHFFEVYKDLEPGKSVEGADWVGRTEAEAEIERSYKRFKDQGGH.

Glu-8 is a Mg(2+) binding site. 3 residues coordinate substrate: Lys-16, Arg-30, and Tyr-42. Mg(2+)-binding residues include Asp-52, Asp-57, Asp-84, and Asp-89. Residue Asp-89 is the Proton acceptor of the active site. Tyr-126 contacts substrate.

Belongs to the PPase family. Homohexamer. Mg(2+) serves as cofactor.

Its subcellular location is the cytoplasm. It carries out the reaction diphosphate + H2O = 2 phosphate + H(+). Functionally, catalyzes the hydrolysis of inorganic pyrophosphate (PPi) forming two phosphate ions. The chain is Inorganic pyrophosphatase from Streptomyces coelicolor (strain ATCC BAA-471 / A3(2) / M145).